The primary structure comprises 105 residues: Nitrogen fixation nifHD region GlnB-like protein 1 (105 aa).

The protein belongs to the P(II) protein family.

Functionally, could be involved in the regulation of nitrogen fixation. This is Nitrogen fixation nifHD region GlnB-like protein 1 (glnBA) from Methanothermococcus thermolithotrophicus (Methanococcus thermolithotrophicus).